The primary structure comprises 573 residues: L-lactate dehydrogenase (cytochrome) (573 aa).

The transit peptide at 1–73 directs the protein to the mitochondrion; sequence MFKSQLRTAT…LYQKDKFISA (73 aa). The 78-residue stretch at 80 to 157 folds into the Cytochrome b5 heme-binding domain; sequence DIELTPEIVS…PPEKHLGPLV (78 aa). Residues His-115, His-138, and Tyr-208 each contribute to the heme b site. In terms of domain architecture, FMN hydroxy acid dehydrogenase spans 182–542; it reads PPLSQMINLH…TPELLDTRSI (361 aa). Residue Tyr-208 participates in pyruvate binding. Residues 260–263, Ser-290, and Gln-313 each bind FMN; that span reads SATA. Tyr-315 provides a ligand contact to pyruvate. Position 341 (Thr-341) interacts with FMN. Lys-357 contacts heme b. Residue Lys-408 participates in FMN binding. Pyruvate-binding residues include His-432 and Arg-435. Residues 468 to 472 and 491 to 492 each bind FMN; these read DGGVR and GR.

The protein in the N-terminal section; belongs to the cytochrome b5 family. It in the C-terminal section; belongs to the FMN-dependent alpha-hydroxy acid dehydrogenase family. In terms of assembly, homotetramer. FMN is required as a cofactor. Requires heme b as cofactor.

It localises to the mitochondrion intermembrane space. The enzyme catalyses (S)-lactate + 2 Fe(III)-[cytochrome c] = 2 Fe(II)-[cytochrome c] + pyruvate + 2 H(+). In terms of biological role, catalyzes the oxidation of (S)-lactate (L-lactate) to pyruvate with subsequent transfer of electrons to cytochrome c. Is involved in the utilization of (S)-lactate as a sole source of carbon for growth. The protein is L-lactate dehydrogenase (cytochrome) (CYB2) of Wickerhamomyces anomalus (Yeast).